A 393-amino-acid polypeptide reads, in one-letter code: Ceramide synthase 4 (393 aa).

The Lumenal portion of the chain corresponds to 1–31; it reads MSFSLSEWLWQETYWLPPNVTWAELEDRDGL. Residue asparagine 19 is glycosylated (N-linked (GlcNAc...) asparagine). Residues 32 to 52 traverse the membrane as a helical segment; it reads VFAHPHHVLAAFPVALVLVAV. The interval 67-128 is homeobox-like; that stretch reads WMGVQDPIRR…RRRRNQDRPS (62 aa). A TLC domain is found at 131–332; it reads KKFCEACWRF…ILRMLYSFLH (202 aa). A run of 4 helical transmembrane segments spans residues 140–160, 179–199, 217–237, and 265–285; these read FVFY…ESWL, LYWW…TLPF, VGLI…VVLL, and FIMF…TQVI. Residues 291–301 carry the Last loop motif motif; sequence DSIKNSGPFFG. Residues 304-324 traverse the membrane as a helical segment; sequence FFIVLLVMLQILHVYWFCLIL. Residues 325–393 lie on the Cytoplasmic side of the membrane; that stretch reads RMLYSFLHKG…CLTNGHTRAT (69 aa). The tract at residues 341-393 is disordered; sequence RSDVEEPDSSDDEPVSEGPQLKNGMARGSRVAVTNGPRSRAAACLTNGHTRAT. A phosphoserine mark is found at serine 342, serine 349, and serine 350. Residues 345-355 are compositionally biased toward acidic residues; sequence EEPDSSDDEPV.

Post-translationally, phosphorylated at the C-terminus by CK2. In terms of tissue distribution, ubiquitously expressed, with highest levels in skin.

It is found in the endoplasmic reticulum membrane. It carries out the reaction sphinganine + octadecanoyl-CoA = N-(octadecanoyl)-sphinganine + CoA + H(+). It catalyses the reaction eicosanoyl-CoA + sphinganine = N-eicosanoylsphinganine + CoA + H(+). The catalysed reaction is docosanoyl-CoA + sphinganine = N-docosanoylsphinganine + CoA + H(+). The enzyme catalyses tetracosanoyl-CoA + sphinganine = N-tetracosanoylsphinganine + CoA + H(+). It carries out the reaction hexacosanoyl-CoA + sphinganine = N-hexacosanoylsphinganine + CoA + H(+). It catalyses the reaction a fatty acyl-CoA + sphing-4-enine = an N-acylsphing-4-enine + CoA + H(+). The catalysed reaction is sphing-4-enine + octadecanoyl-CoA = N-octadecanoylsphing-4-enine + CoA + H(+). The enzyme catalyses hexadecasphinganine + octadecanoyl-CoA = N-octadecanoylhexadecasphinganine + CoA + H(+). Its pathway is lipid metabolism; sphingolipid metabolism. Its function is as follows. Ceramide synthase that catalyzes formation of ceramide from sphinganine and acyl-CoA substrates, with high selectivity toward long and very-long chains (C18:0-C22:0) as acyl donor. This chain is Ceramide synthase 4, found in Mus musculus (Mouse).